A 529-amino-acid polypeptide reads, in one-letter code: Beta-hexosaminidase subunit alpha (529 aa).

An N-terminal signal peptide occupies residues 1 to 22 (MASSRLWFSLLLAAALAGRATA). The propeptide occupies 23-88 (LWPWPQNIQT…PRPYLTGKRH (66 aa)). A disulfide bridge connects residues Cys58 and Cys104. Asn115, Asn157, and Asn295 each carry an N-linked (GlcNAc...) asparagine glycan. A disulfide bond links Cys277 and Cys328. Catalysis depends on Glu323, which acts as the Proton donor. Residues 423–424 (NR) form a critical for hydrolysis GM2 gangliosides region. The cysteines at positions 505 and 522 are disulfide-linked.

The protein belongs to the glycosyl hydrolase 20 family. There are 3 beta-hexosaminidase isozymes: isozyme A (hexosaminidase A) is a heterodimer composed of one subunit alpha and one subunit beta (chain A and B); isozyme B (hexosaminidase B) is a homodimer of two beta subunits (two chains A and B); isozyme S (hexosaminidase S) is a homodimer of two alpha subunits. The composition of the dimer (isozyme A versus isozyme S) has a significant effect on the substrate specificity of the alpha subunit active site.

Its subcellular location is the lysosome. The enzyme catalyses Hydrolysis of terminal non-reducing N-acetyl-D-hexosamine residues in N-acetyl-beta-D-hexosaminides.. It catalyses the reaction N-acetyl-beta-D-galactosaminyl-(1-&gt;4)-beta-D-3-sulfogalactosyl-(1-&gt;4)-beta-D-glucosyl-(1&lt;-&gt;1')-ceramide + H2O = a beta-D-3-sulfogalactosyl-(1-&gt;4)-beta-D-glucosyl-(1&lt;-&gt;1')-ceramide + N-acetyl-beta-D-galactosamine. It carries out the reaction a ganglioside GM2 (d18:1(4E)) + H2O = a ganglioside GM3 (d18:1(4E)) + N-acetyl-beta-D-galactosamine. The catalysed reaction is a ganglioside GM2 + H2O = a ganglioside GM3 + N-acetyl-beta-D-galactosamine. The enzyme catalyses beta-D-GalNAc-(1-&gt;4)-alpha-L-IdoA-(1-&gt;3)-beta-D-GalNAc-4-sulfate-(1-&gt;4)-alpha-L-IdoA-(1-&gt;3)-D-GalNAc-4-sulfate + H2O = alpha-L-IdoA-(1-&gt;3)-beta-D-GalNAc-4-sulfate-(1-&gt;4)-alpha-L-IdoA-(1-&gt;3)-D-GalNAc-4-sulfate + N-acetyl-D-galactosamine. It catalyses the reaction N-acetyl-beta-D-6-sulfogalactosaminyl-(1-&gt;4)-alpha-L-iduronyl-(1-&gt;3)-N-acetyl-D-6-sulfogalactosamine + H2O = alpha-L-iduronyl-(1-&gt;3)-N-acetyl-D-6-sulfogalactosamine + N-acetyl-D-6-sulfogalactosamine. Its activity is regulated as follows. Addition of GM2A stimulates the hydrolysis of sulfated glycosphingolipid SM2 and the ganglioside GM2. Its function is as follows. Hydrolyzes the non-reducing end N-acetyl-D-hexosamine and/or sulfated N-acetyl-D-hexosamine of glycoconjugates, such as the oligosaccharide moieties from proteins and neutral glycolipids, or from certain mucopolysaccharides. The isozyme S is as active as the isozyme A on the anionic bis-sulfated glycans, the chondroitin-6-sulfate trisaccharide (C6S-3), and the dermatan sulfate pentasaccharide, and the sulfated glycosphingolipid SM2. The isozyme B does not hydrolyze each of these substrates, however hydrolyzes efficiently neutral oligosaccharide. Only the isozyme A is responsible for the degradation of GM2 gangliosides in the presence of GM2A. This chain is Beta-hexosaminidase subunit alpha, found in Pongo abelii (Sumatran orangutan).